The sequence spans 638 residues: 1-deoxy-D-xylulose-5-phosphate synthase (638 aa).

Thiamine diphosphate contacts are provided by residues H72 and 113-115; that span reads GHA. Residue D144 participates in Mg(2+) binding. Thiamine diphosphate contacts are provided by residues 145–146, N174, Y287, and E370; that span reads GA. Mg(2+) is bound at residue N174.

The protein belongs to the transketolase family. DXPS subfamily. As to quaternary structure, homodimer. Mg(2+) is required as a cofactor. The cofactor is thiamine diphosphate.

It catalyses the reaction D-glyceraldehyde 3-phosphate + pyruvate + H(+) = 1-deoxy-D-xylulose 5-phosphate + CO2. Its pathway is metabolic intermediate biosynthesis; 1-deoxy-D-xylulose 5-phosphate biosynthesis; 1-deoxy-D-xylulose 5-phosphate from D-glyceraldehyde 3-phosphate and pyruvate: step 1/1. Functionally, catalyzes the acyloin condensation reaction between C atoms 2 and 3 of pyruvate and glyceraldehyde 3-phosphate to yield 1-deoxy-D-xylulose-5-phosphate (DXP). This Thermosynechococcus vestitus (strain NIES-2133 / IAM M-273 / BP-1) protein is 1-deoxy-D-xylulose-5-phosphate synthase.